Here is a 471-residue protein sequence, read N- to C-terminus: 3-isopropylmalate dehydratase large subunit (471 aa).

The [4Fe-4S] cluster site is built by Cys347, Cys407, and Cys410.

Belongs to the aconitase/IPM isomerase family. LeuC type 1 subfamily. As to quaternary structure, heterodimer of LeuC and LeuD. The cofactor is [4Fe-4S] cluster.

It carries out the reaction (2R,3S)-3-isopropylmalate = (2S)-2-isopropylmalate. It participates in amino-acid biosynthesis; L-leucine biosynthesis; L-leucine from 3-methyl-2-oxobutanoate: step 2/4. In terms of biological role, catalyzes the isomerization between 2-isopropylmalate and 3-isopropylmalate, via the formation of 2-isopropylmaleate. The protein is 3-isopropylmalate dehydratase large subunit of Buchnera aphidicola subsp. Acyrthosiphon pisum (strain APS) (Acyrthosiphon pisum symbiotic bacterium).